The primary structure comprises 585 residues: Butyrophilin subfamily 3 member A3 (585 aa).

An N-terminal signal peptide occupies residues 1–29 (MKMASSLACLLLNFHVSVFLVQLLTPCSA). 2 Ig-like V-type domains span residues 30–139 (QFSV…KALV) and 145–236 (ALGS…ASIS). Over 30 to 248 (QFSVLGPSGP…DPFFTSAQPW (219 aa)) the chain is Extracellular. 2 disulfides stabilise this stretch: cysteine 52–cysteine 126 and cysteine 166–cysteine 220. N-linked (GlcNAc...) asparagine glycosylation is present at asparagine 115. A helical membrane pass occupies residues 249-269 (IAALAGTLPISLLLLAGASYF). Over 270–585 (LWRQQKEKIA…KPQACTEALY (316 aa)) the chain is Cytoplasmic. The B30.2/SPRY domain occupies 322-518 (RGEKSLAYHE…LTICPTPKEV (197 aa)). The interval 560–585 (AGAEGVSPSTTTSQNHKPQACTEALY) is disordered. The span at 566-576 (SPSTTTSQNHK) shows a compositional bias: polar residues.

It belongs to the immunoglobulin superfamily. BTN/MOG family.

It is found in the membrane. The polypeptide is Butyrophilin subfamily 3 member A3 (BTN3A3) (Pongo abelii (Sumatran orangutan)).